The following is a 469-amino-acid chain: Programmed cell death protein 4 (469 aa).

Met1 bears the N-acetylmethionine mark. Disordered stretches follow at residues 1 to 30 and 58 to 128; these read MDVENEQILNVNPTDPDNLSDSLFSGDEEN and KAKR…GTPG. A compositionally biased stretch (polar residues) spans 7 to 23; it reads QILNVNPTDPDNLSDSL. Ser25 is modified (phosphoserine). A Nuclear localization signal motif is present at residues 58–64; it reads KAKRRLR. The residue at position 67 (Ser67) is a Phosphoserine; by PKB and RPS6KB1. 5 positions are modified to phosphoserine: Ser68, Ser71, Ser76, Ser78, and Ser94. The Phosphodegron signature appears at 70 to 76; the sequence is DSGRGDS. Gly residues predominate over residues 114-125; the sequence is KKGGAGGKGVWG. Residue Tyr152 is modified to Phosphotyrosine. The MI 1 domain occupies 163-284; sequence AFEKTLTPII…CNTYIDSYKG (122 aa). Phosphoserine occurs at positions 313 and 317. The MI 2 domain occupies 326–449; sequence HLVKEIDMLL…SKQLRDLCPS (124 aa). Positions 448 to 454 match the Nuclear localization signal motif; it reads PSRGRKR. Ser457 is modified (phosphoserine).

It belongs to the PDCD4 family. In terms of assembly, interacts (via MI domains) with EIF4A2. Interacts (via MI domains) with EIF4A1 (via N-terminal domain). Heterotrimer with EIF4A1; one molecule of PDCD4 binds two molecules of EIF4A1. Interacts with EIF4G1. May form a complex with EIF4A1 and EIF4G1. The interaction between PDCD4 and EIF4A1 interferes with the interaction between EIF4A1 and EIF4G. When phosphorylated, interacts with BTRC and FBXW11. In terms of processing, polyubiquitinated, leading to its proteasomal degradation. Rapidly degraded in response to mitogens. Phosphorylation of the phosphodegron promotes interaction with BTRC and proteasomal degradation. Phosphorylated at Ser-67 by RPS6KB1 in response to mitogens; phosphorylation promotes proteasomal degradation of PDCD4.

It is found in the nucleus. The protein resides in the cytoplasm. Inhibits translation initiation and cap-dependent translation. May excert its function by hindering the interaction between EIF4A1 and EIF4G. Inhibits the helicase activity of EIF4A. Modulates the activation of JUN kinase. Down-regulates the expression of MAP4K1, thus inhibiting events important in driving invasion, namely, MAPK85 activation and consequent JUN-dependent transcription. May play a role in apoptosis. Tumor suppressor. Inhibits tumor promoter-induced neoplastic transformation. Binds RNA. This Rattus norvegicus (Rat) protein is Programmed cell death protein 4 (Pdcd4).